The chain runs to 973 residues: Sodium/calcium exchanger 1 (973 aa).

A signal peptide spans 1–35 (MYNMRRLSLSPTFSMGFHLLVTVSLLFSHVDHVIA). Residues 36 to 74 (ETEMEGEGNETGECTGSYYCKKGVILPIWEPQDPSFGDK) lie on the Extracellular side of the membrane. An N-linked (GlcNAc...) asparagine glycan is attached at asparagine 44. Residues 75–95 (IARATVYFVAMVYMFLGVSII) form a helical membrane-spanning segment. Over 96–136 (ADRFMSSIEVITSQEKEITIKKPNGETTKTTVRIWNETVSN) the chain is Cytoplasmic. Residues 137-157 (LTLMALGSSAPEILLSVIEVC) form a helical membrane-spanning segment. Residues 141-181 (ALGSSAPEILLSVIEVCGHNFTAGDLGPSTIVGSAAFNMFI) form an Alpha-1 repeat. At 158 to 170 (GHNFTAGDLGPST) the chain is on the extracellular side. An N-linked (GlcNAc...) asparagine glycan is attached at asparagine 160. Residues 171–191 (IVGSAAFNMFIIIALCVYVVP) traverse the membrane as a helical segment. Over 192–204 (DGETRKIKHLRVF) the chain is Cytoplasmic. A helical membrane pass occupies residues 205 to 225 (FVTAAWSIFAYTWLYIILSVI). Over 226 to 231 (SPGVVE) the chain is Extracellular. The helical transmembrane segment at 232 to 252 (VWEGLLTFFFFPICVVFAWVA) threads the bilayer. The Cytoplasmic segment spans residues 253–800 (DRRLLFYKYV…FVPPTEYWNG (548 aa)). The putative calmodulin-binding region stretch occupies residues 254–273 (RRLLFYKYVYKRYRAGKQRG). Phosphoserine is present on residues serine 285 and serine 392. Calx-beta domains are found at residues 396 to 496 (VNTE…VHLS) and 527 to 627 (ATVT…LEIG). Ca(2+) contacts are provided by glutamate 420, aspartate 456, aspartate 481, aspartate 482, isoleucine 484, glutamate 486, glutamate 489, aspartate 533, aspartate 534, aspartate 535, glutamate 551, aspartate 587, aspartate 613, glutamate 614, glutamate 615, and glutamate 718. A helical transmembrane segment spans residues 801 to 821 (WACFIVSILMIGLLTAFIGDL). Residues 822–824 (ASH) are Extracellular-facing. The helical transmembrane segment at 825–845 (FGCTIGLKDSVTAVVFVALGT) threads the bilayer. An Alpha-2 repeat occupies 842 to 878 (ALGTSVPDTFASKVAATQDQYADASIGNVTGSNAVNV). The Cytoplasmic portion of the chain corresponds to 846-874 (SVPDTFASKVAATQDQYADASIGNVTGSN). A helical transmembrane segment spans residues 875 to 895 (AVNVFLGIGVAWSIAAIYHAA). At 896-906 (NGEQFKVSPGT) the chain is on the extracellular side. The helical transmembrane segment at 907-927 (LAFSVTLFTIFAFINVGVLLY) threads the bilayer. Residues 928–944 (RRRPEIGGELGGPRTAK) lie on the Cytoplasmic side of the membrane. Residues 945-965 (LLTSCLFVLLWLLYIFFSSLE) form a helical membrane-spanning segment. Residues 966 to 973 (AYCHIKGF) lie on the Extracellular side of the membrane.

Belongs to the Ca(2+):cation antiporter (CaCA) (TC 2.A.19) family. SLC8 subfamily. Detected primarily in heart and at lower levels in brain. Expressed in cardiac sarcolemma, brain, kidney, liver, pancreas, skeletal muscle, placenta and lung.

It is found in the cell membrane. It catalyses the reaction Ca(2+)(in) + 3 Na(+)(out) = Ca(2+)(out) + 3 Na(+)(in). With respect to regulation, activated by micromolar levels of Ca(2+). Its function is as follows. Mediates the exchange of one Ca(2+) ion against three to four Na(+) ions across the cell membrane, and thereby contributes to the regulation of cytoplasmic Ca(2+) levels and Ca(2+)-dependent cellular processes. Contributes to Ca(2+) transport during excitation-contraction coupling in muscle. In a first phase, voltage-gated channels mediate the rapid increase of cytoplasmic Ca(2+) levels due to release of Ca(2+) stores from the endoplasmic reticulum. SLC8A1 mediates the export of Ca(2+) from the cell during the next phase, so that cytoplasmic Ca(2+) levels rapidly return to baseline. Required for normal embryonic heart development and the onset of heart contractions. This chain is Sodium/calcium exchanger 1 (SLC8A1), found in Homo sapiens (Human).